A 203-amino-acid chain; its full sequence is Holliday junction branch migration complex subunit RuvA (203 aa).

The domain I stretch occupies residues 1 to 64; it reads MIGRLRGIII…EDAQLLYGFN (64 aa). The tract at residues 65–142 is domain II; it reads NKQERTLFKE…KGLHGDLFTP (78 aa). The flexible linker stretch occupies residues 143 to 154; that stretch reads AADLVLTSPASP. The domain III stretch occupies residues 155-203; it reads ATDDAEQEAVAALVALGYKPQEASRMVSKIARPDASSETLIREALRAAL.

It belongs to the RuvA family. Homotetramer. Forms an RuvA(8)-RuvB(12)-Holliday junction (HJ) complex. HJ DNA is sandwiched between 2 RuvA tetramers; dsDNA enters through RuvA and exits via RuvB. An RuvB hexamer assembles on each DNA strand where it exits the tetramer. Each RuvB hexamer is contacted by two RuvA subunits (via domain III) on 2 adjacent RuvB subunits; this complex drives branch migration. In the full resolvosome a probable DNA-RuvA(4)-RuvB(12)-RuvC(2) complex forms which resolves the HJ.

The protein localises to the cytoplasm. In terms of biological role, the RuvA-RuvB-RuvC complex processes Holliday junction (HJ) DNA during genetic recombination and DNA repair, while the RuvA-RuvB complex plays an important role in the rescue of blocked DNA replication forks via replication fork reversal (RFR). RuvA specifically binds to HJ cruciform DNA, conferring on it an open structure. The RuvB hexamer acts as an ATP-dependent pump, pulling dsDNA into and through the RuvAB complex. HJ branch migration allows RuvC to scan DNA until it finds its consensus sequence, where it cleaves and resolves the cruciform DNA. This chain is Holliday junction branch migration complex subunit RuvA, found in Shigella boydii serotype 18 (strain CDC 3083-94 / BS512).